The primary structure comprises 504 residues: ATP-dependent rRNA helicase RRP3 (504 aa).

Residues 34–62 (ASASSAASTKESLPVSETISISTSETPVS) are compositionally biased toward low complexity. The tract at residues 34–99 (ASASSAASTK…SSSSPPSVQS (66 aa)) is disordered. Residues 68-79 (SNKEDLSTKKDQ) are compositionally biased toward basic and acidic residues. A compositionally biased stretch (low complexity) spans 80–99 (SSASSSSSTSSSSSPPSVQS). The Q motif motif lies at 98 to 126 (QSFTEFDLVPELLESIQSLKYTQPTPIQA). The 173-residue stretch at 129-301 (IPHALQGKDI…RSLNSPVQVE (173 aa)) folds into the Helicase ATP-binding domain. 142–149 (AETGSGKT) provides a ligand contact to ATP. A DEAD box motif is present at residues 248-251 (DEVD). One can recognise a Helicase C-terminal domain in the interval 327–471 (RLIQIVNLDS…DLPLDEMQGL (145 aa)).

The protein belongs to the DEAD box helicase family. DDX47/RRP3 subfamily. As to quaternary structure, interacts with the SSU processome.

It is found in the nucleus. The enzyme catalyses ATP + H2O = ADP + phosphate + H(+). ATP-dependent rRNA helicase required for pre-ribosomal RNA processing. Involved in the maturation of the 35S-pre-rRNA and to its cleavage to mature 18S rRNA. The polypeptide is ATP-dependent rRNA helicase RRP3 (Lodderomyces elongisporus (strain ATCC 11503 / CBS 2605 / JCM 1781 / NBRC 1676 / NRRL YB-4239) (Yeast)).